The chain runs to 342 residues: Pyrophosphate--fructose 6-phosphate 1-phosphotransferase (342 aa).

Residue Gly10 coordinates diphosphate. A Mg(2+)-binding site is contributed by Glu103. Substrate-binding positions include 126-128, Arg163, 170-172, Glu222, Arg266, and 272-275; these read TID, MGR, and HVQR. Catalysis depends on Asp128, which acts as the Proton acceptor.

This sequence belongs to the phosphofructokinase type A (PFKA) family. Mixed-substrate PFK group III subfamily. As to quaternary structure, homodimer or homotetramer. Requires Mg(2+) as cofactor.

It is found in the cytoplasm. It carries out the reaction beta-D-fructose 6-phosphate + diphosphate = beta-D-fructose 1,6-bisphosphate + phosphate + H(+). Its pathway is carbohydrate degradation; glycolysis; D-glyceraldehyde 3-phosphate and glycerone phosphate from D-glucose: step 3/4. Its activity is regulated as follows. Non-allosteric. Its function is as follows. Catalyzes the phosphorylation of D-fructose 6-phosphate, the first committing step of glycolysis. Uses inorganic phosphate (PPi) as phosphoryl donor instead of ATP like common ATP-dependent phosphofructokinases (ATP-PFKs), which renders the reaction reversible, and can thus function both in glycolysis and gluconeogenesis. Consistently, PPi-PFK can replace the enzymes of both the forward (ATP-PFK) and reverse (fructose-bisphosphatase (FBPase)) reactions. In Streptomyces coelicolor (strain ATCC BAA-471 / A3(2) / M145), this protein is Pyrophosphate--fructose 6-phosphate 1-phosphotransferase.